Here is a 510-residue protein sequence, read N- to C-terminus: MIWHVQNENFILDSTRIFMKAFHLLLFNGSFIFPECILIFGLILLLMIDSTSDQKDRPWFYFISSTSLVMSITALLFRWKEEPIISFSGNFQTNNFNEIFQFLILLCSTLCIPLSVEYIECTEMAITEFLLFVLTATLGGMFLCGANDLITIFVAPECFSLCSYLLSGYTKRDVRSNEATTKYLLMGGASSSILVHGFSWLYGSSGGEIELQEIVNGLINTQMYNSPGISIALISITVGIGFKLSPAPFHQWTPDVYEGSPTPVVAFLSVTSKVAASASATRIFDIPFYFSSNEWHLLLEILAILSMILGNLIAITQTSMKRMLAYSSIGQIGYVIIGIIVGDSNNGYASMITYMLFYISMNLGTFARIVSFGLRTGTDNIRDYAGLYTKDPFLALSSALCLLSLGGLPPLAGFFGKLHLFWCGWQAGLYFLVSIGLLTSVVSIYYYLKIIKLLMTGRNQEITPHVRNYRRSPLRSNNSIEWSMTVCVIASTIPGISMNPILAIAQDTLF.

Transmembrane regions (helical) follow at residues 24–44 (LLLFNGSFIFPECILIFGLIL), 59–79 (WFYFISSTSLVMSITALLFRW), 99–119 (IFQFLILLCSTLCIPLSVEYI), 124–144 (MAITEFLLFVLTATLGGMFLC), 149–169 (LITIFVAPECFSLCSYLLSGY), 183–203 (YLLMGGASSSILVHGFSWLYG), 229–249 (ISIALISITVGIGFKLSPAPF), 295–315 (WHLLLEILAILSMILGNLIAI), 323–343 (MLAYSSIGQIGYVIIGIIVGD), 347–367 (GYASMITYMLFYISMNLGTFA), 395–415 (ALSSALCLLSLGGLPPLAGFF), and 418–438 (LHLFWCGWQAGLYFLVSIGLL).

This sequence belongs to the complex I subunit 2 family. NDH is composed of at least 16 different subunits, 5 of which are encoded in the nucleus.

The protein localises to the plastid. It localises to the chloroplast thylakoid membrane. The enzyme catalyses a plastoquinone + NADH + (n+1) H(+)(in) = a plastoquinol + NAD(+) + n H(+)(out). It carries out the reaction a plastoquinone + NADPH + (n+1) H(+)(in) = a plastoquinol + NADP(+) + n H(+)(out). NDH shuttles electrons from NAD(P)H:plastoquinone, via FMN and iron-sulfur (Fe-S) centers, to quinones in the photosynthetic chain and possibly in a chloroplast respiratory chain. The immediate electron acceptor for the enzyme in this species is believed to be plastoquinone. Couples the redox reaction to proton translocation, and thus conserves the redox energy in a proton gradient. This Allium textile (Textile onion) protein is NAD(P)H-quinone oxidoreductase subunit 2, chloroplastic.